Reading from the N-terminus, the 536-residue chain is Phosphoenolpyruvate carboxykinase (ATP) (536 aa).

Residues Arg-61, Tyr-195, and Lys-201 each contribute to the substrate site. ATP is bound by residues Lys-201, His-220, and 236–244 (GLSGTGKTT). Residues Lys-201 and His-220 each contribute to the Mn(2+) site. Asp-257 lines the Mn(2+) pocket. 3 residues coordinate ATP: Glu-285, Arg-322, and Thr-447. Arg-322 is a binding site for substrate.

Belongs to the phosphoenolpyruvate carboxykinase (ATP) family. It depends on Mn(2+) as a cofactor.

The protein localises to the cytoplasm. The enzyme catalyses oxaloacetate + ATP = phosphoenolpyruvate + ADP + CO2. The protein operates within carbohydrate biosynthesis; gluconeogenesis. Involved in the gluconeogenesis. Catalyzes the conversion of oxaloacetate (OAA) to phosphoenolpyruvate (PEP) through direct phosphoryl transfer between the nucleoside triphosphate and OAA. The polypeptide is Phosphoenolpyruvate carboxykinase (ATP) (Rhizobium etli (strain ATCC 51251 / DSM 11541 / JCM 21823 / NBRC 15573 / CFN 42)).